A 524-amino-acid chain; its full sequence is Cytochrome P450 4F3 (524 aa).

A helical transmembrane segment spans residues 15 to 35; sequence AASPWLLLLLVGASCLLAYIL. Heme is bound at residue Cys468.

Belongs to the cytochrome P450 family. Heme is required as a cofactor.

Its subcellular location is the endoplasmic reticulum membrane. The protein localises to the microsome membrane. The enzyme catalyses leukotriene B4 + reduced [NADPH--hemoprotein reductase] + O2 = 18-hydroxy-leukotriene B4 + oxidized [NADPH--hemoprotein reductase] + H2O + H(+). The catalysed reaction is leukotriene B4 + reduced [NADPH--hemoprotein reductase] + O2 = 19-hydroxy-leukotriene B4 + oxidized [NADPH--hemoprotein reductase] + H2O + H(+). It participates in lipid metabolism; leukotriene B4 degradation. Functionally, a cytochrome P450 monooxygenase involved in the metabolism of the pro-inflammatory lipid mediator leukotriene B4 (LTB4). Hydroxylates at the omega-1 and omega-2 positions LTB4. This oxidation step leads to LTB4 inactivation, which is postulated to be a crucial part of the resolution of inflammation. Mechanistically, uses molecular oxygen inserting one oxygen atom into a substrate, and reducing the second into a water molecule, with two electrons provided by NADPH via cytochrome P450 reductase (CPR; NADPH-ferrihemoprotein reductase). The protein is Cytochrome P450 4F3 of Rattus norvegicus (Rat).